Reading from the N-terminus, the 127-residue chain is Aspartate 1-decarboxylase (127 aa).

The Schiff-base intermediate with substrate; via pyruvic acid role is filled by serine 25. The residue at position 25 (serine 25) is a Pyruvic acid (Ser). Threonine 57 serves as a coordination point for substrate. The active-site Proton donor is tyrosine 58. 73–75 (GAA) is a binding site for substrate.

It belongs to the PanD family. In terms of assembly, heterooctamer of four alpha and four beta subunits. The cofactor is pyruvate. Is synthesized initially as an inactive proenzyme, which is activated by self-cleavage at a specific serine bond to produce a beta-subunit with a hydroxyl group at its C-terminus and an alpha-subunit with a pyruvoyl group at its N-terminus.

Its subcellular location is the cytoplasm. It carries out the reaction L-aspartate + H(+) = beta-alanine + CO2. The protein operates within cofactor biosynthesis; (R)-pantothenate biosynthesis; beta-alanine from L-aspartate: step 1/1. Catalyzes the pyruvoyl-dependent decarboxylation of aspartate to produce beta-alanine. The polypeptide is Aspartate 1-decarboxylase (Listeria monocytogenes serotype 4b (strain CLIP80459)).